We begin with the raw amino-acid sequence, 193 residues long: Ion-translocating oxidoreductase complex subunit A (193 aa).

6 helical membrane-spanning segments follow: residues 5–25, 39–59, 62–82, 102–122, 134–154, and 172–192; these read ALLL…FLGL, LGMG…SWML, WLLA…LVIA, SLGI…VALL, VLFG…FAGL, and AAFI…GLVA.

Belongs to the NqrDE/RnfAE family. The complex is composed of six subunits: RnfA, RnfB, RnfC, RnfD, RnfE and RnfG.

The protein resides in the cell inner membrane. Its function is as follows. Part of a membrane-bound complex that couples electron transfer with translocation of ions across the membrane. The sequence is that of Ion-translocating oxidoreductase complex subunit A from Aromatoleum aromaticum (strain DSM 19018 / LMG 30748 / EbN1) (Azoarcus sp. (strain EbN1)).